Here is a 110-residue protein sequence, read N- to C-terminus: Protein YcgL (110 aa).

One can recognise a YcgL domain in the interval 14–98 (MFCVIYRSSK…PPEDLLKQHL (85 aa)).

The protein is Protein YcgL of Salmonella arizonae (strain ATCC BAA-731 / CDC346-86 / RSK2980).